A 368-amino-acid polypeptide reads, in one-letter code: MTVKLTIDCMGGDHGPSVTVPAAVKFVRAHPDAHLMLVGIESAIRAQLKKLKALDDPALTIVPATEVVAMDDPVEVALRKKKDSSMRVALNHVKEGAAQACISAGNTGALMAVSRYVLKTLPGIERPAIAFALPNPTGYTMMLDLGANVDCEPQHLLQFAEMGHALVAALEGKERPTIGLLNIGEEVIKGNETIKRAGELLRASTLNFRGNVEGNDIYKGTVDVIVCDGFVGNVALKTSEGLAQMLSDIIREEFGRSLMSKLMALLALPVLMRFKKRVDHRQYNGAALLGLKSLVIKSHGSADAYAFEWAIKRGYDAVKNGVLERLARAMADNSVSLGEGEHNAGGAGHASPAAGHHAEPSAAQSSKA.

The disordered stretch occupies residues 337-368 (LGEGEHNAGGAGHASPAAGHHAEPSAAQSSKA). Low complexity predominate over residues 349–368 (HASPAAGHHAEPSAAQSSKA).

This sequence belongs to the PlsX family. In terms of assembly, homodimer. Probably interacts with PlsY.

It localises to the cytoplasm. It carries out the reaction a fatty acyl-[ACP] + phosphate = an acyl phosphate + holo-[ACP]. It participates in lipid metabolism; phospholipid metabolism. Functionally, catalyzes the reversible formation of acyl-phosphate (acyl-PO(4)) from acyl-[acyl-carrier-protein] (acyl-ACP). This enzyme utilizes acyl-ACP as fatty acyl donor, but not acyl-CoA. The sequence is that of Phosphate acyltransferase from Burkholderia lata (strain ATCC 17760 / DSM 23089 / LMG 22485 / NCIMB 9086 / R18194 / 383).